A 333-amino-acid chain; its full sequence is Acetyltransferase Pat (333 aa).

3',5'-cyclic AMP is bound by residues 85–88 (GEIA), 95–96 (RT), and arginine 135. Residues 153–317 (FYLRPVLPGD…DTVPFEPELI (165 aa)) form the N-acetyltransferase domain. Glutamate 211 contacts Mg(2+). Substrate is bound by residues 237–239 (FTV), 245–250 (GRGIGS), asparagine 276, and arginine 285.

Homodimer. Mg(2+) is required as a cofactor.

Allosterically regulated by cAMP. Functionally, catalyzes specifically the acetylation of the epsilon-amino group of a highly conserved lysine residue in acetyl-CoA synthetase (ACS) and of the universal stress protein (USP) MSMEG_4207. Acetylation results in the inactivation of ACS activity and could be important for mycobacteria to adjust to environmental changes. This Mycolicibacterium smegmatis (strain ATCC 700084 / mc(2)155) (Mycobacterium smegmatis) protein is Acetyltransferase Pat.